The following is a 417-amino-acid chain: C4-dicarboxylate transport protein (417 aa).

A run of 8 helical transmembrane segments spans residues 4–26 (IYVQVLIAIVLGVLVGAIWPQIG), 41–60 (KLVIAPVIFCTVAGGIARMG), 72–94 (ALIYFEVVSTLALVIGLVVGRLI), 137–159 (FIGAFADGNLLQVLVIAILTGFA), 180–202 (LFFGIIHIVVRLAPIGAFGAMGF), 217–239 (ALVATFYVTSLLFVLVVLGGIAW), 285–307 (VVGLVIPTGYSFNLDGTNIYMTL), and 347–369 (FITLAATLAVVPDIPIAALAILV).

This sequence belongs to the dicarboxylate/amino acid:cation symporter (DAACS) (TC 2.A.23) family.

The protein resides in the cell inner membrane. Its function is as follows. Responsible for the transport of dicarboxylates such as succinate, fumarate, and malate from the periplasm across the membrane. This Caulobacter vibrioides (strain ATCC 19089 / CIP 103742 / CB 15) (Caulobacter crescentus) protein is C4-dicarboxylate transport protein.